Consider the following 485-residue polypeptide: Malonate-semialdehyde dehydrogenase (485 aa).

NAD(+) is bound by residues Phe-155, Lys-179, Glu-182, Arg-183, and Ser-232. Cys-287 serves as the catalytic Nucleophile. Glu-386 contributes to the NAD(+) binding site.

This sequence belongs to the aldehyde dehydrogenase family. IolA subfamily. Homotetramer.

The catalysed reaction is 3-oxopropanoate + NAD(+) + CoA + H2O = hydrogencarbonate + acetyl-CoA + NADH + H(+). The enzyme catalyses 2-methyl-3-oxopropanoate + NAD(+) + CoA + H2O = propanoyl-CoA + hydrogencarbonate + NADH + H(+). It functions in the pathway polyol metabolism; myo-inositol degradation into acetyl-CoA; acetyl-CoA from myo-inositol: step 7/7. Catalyzes the oxidation of malonate semialdehyde (MSA) and methylmalonate semialdehyde (MMSA) into acetyl-CoA and propanoyl-CoA, respectively. Is involved in a myo-inositol catabolic pathway. Bicarbonate, and not CO2, is the end-product of the enzymatic reaction. The polypeptide is Malonate-semialdehyde dehydrogenase (Halalkalibacterium halodurans (strain ATCC BAA-125 / DSM 18197 / FERM 7344 / JCM 9153 / C-125) (Bacillus halodurans)).